The primary structure comprises 338 residues: MLISQRPTITEEFVDNARSRFVIEPLEPGFGYTLGNSLRRTLLSSIPGAAVTSVKIDGVLHEFTTISGVKEDVSDIILNIKGLVLSSDSDEPVVMQLVKEGPGVVTAGDIQPPAGVEIHNPDLHIATLNETAKIEIELIVERGRGYVPATVTATGGEIGRIPVDQIYSPVLKVSYKVEATRVEQRTDFDKLVIDVETKNSITARDALASAGKTLVELFGLARELNIAAEGIEIGPSPQETEYIAAYSMPIEDLDFSVRSYNCLKREDIHTVGELAERAESDLLDIRNFGQKSINEVKIKLAGLGLTLKDAPEDFDPSTLEGYDAETGGYIDVEAEDSE.

Residues Met1–Asn225 are alpha N-terminal domain (alpha-NTD). An alpha C-terminal domain (alpha-CTD) region spans residues Thr240–Glu338. A disordered region spans residues Leu319–Glu338.

It belongs to the RNA polymerase alpha chain family. In terms of assembly, homodimer. The RNAP catalytic core consists of 2 alpha, 1 beta, 1 beta' and 1 omega subunit. When a sigma factor is associated with the core the holoenzyme is formed, which can initiate transcription.

The catalysed reaction is RNA(n) + a ribonucleoside 5'-triphosphate = RNA(n+1) + diphosphate. Its function is as follows. DNA-dependent RNA polymerase catalyzes the transcription of DNA into RNA using the four ribonucleoside triphosphates as substrates. The sequence is that of DNA-directed RNA polymerase subunit alpha from Corynebacterium glutamicum (strain R).